The sequence spans 179 residues: Large ribosomal subunit protein uL6 (179 aa).

Belongs to the universal ribosomal protein uL6 family. Part of the 50S ribosomal subunit.

This protein binds to the 23S rRNA, and is important in its secondary structure. It is located near the subunit interface in the base of the L7/L12 stalk, and near the tRNA binding site of the peptidyltransferase center. The chain is Large ribosomal subunit protein uL6 from Rippkaea orientalis (strain PCC 8801 / RF-1) (Cyanothece sp. (strain PCC 8801)).